The chain runs to 1196 residues: Truncated transposon Ty1-A Gag-Pol polyprotein (1196 aa).

Residues 101–276 (NSYEPFQYLH…AGLDISTLLP (176 aa)) form the Integrase catalytic domain. Asp112 and Asp177 together coordinate Mg(2+). Disordered regions lie at residues 397 to 528 (SKAV…ETEK), 533 to 552 (RSPS…NIVP), and 571 to 628 (DLPL…DNET). Over residues 401-410 (SPTDSTPPST) the composition is skewed to low complexity. Positions 446–456 (STPQISNIEST) are enriched in polar residues. Over residues 479–494 (ESSHASKSKDFRHSDS) the composition is skewed to basic and acidic residues. Polar residues-rich tracts occupy residues 495 to 523 (YSEN…QISD) and 542 to 552 (PENNSSHNIVP). The Bipartite nuclear localization signal motif lies at 619 to 653 (KKRSLEDNETEIKVSRDTWNTKNMRSLEPPRSKKR). Residues 779-917 (NNYYITQLDI…DILGLEIKYQ (139 aa)) enclose the Reverse transcriptase Ty1/copia-type domain. The Mg(2+) site is built by Asp787, Asp868, Asp869, Asp1051, Glu1093, and Asp1126. The RNase H Ty1/copia-type domain occupies 1051-1193 (DASYGNQPYY…IKTFKLLTNK (143 aa)).

Initially, virus-like particles (VLPs) are composed of the structural unprocessed proteins Gag and Gag-Pol, and also contain the host initiator methionine tRNA (tRNA(i)-Met) which serves as a primer for minus-strand DNA synthesis, and a dimer of genomic Ty RNA. Processing of the polyproteins occurs within the particle and proceeds by an ordered pathway, called maturation. First, the protease (PR) is released by autocatalytic cleavage of the Gag-Pol polyprotein yielding capsid protein p45 and a Pol-p154 precursor protein. This cleavage is a prerequisite for subsequent processing of Pol-p154 at the remaining sites to release the mature structural and catalytic proteins. Maturation takes place prior to the RT reaction and is required to produce transposition-competent VLPs.

The protein resides in the cytoplasm. It is found in the nucleus. The enzyme catalyses DNA(n) + a 2'-deoxyribonucleoside 5'-triphosphate = DNA(n+1) + diphosphate. It carries out the reaction Endonucleolytic cleavage to 5'-phosphomonoester.. In terms of biological role, reverse transcriptase/ribonuclease H (RT) is a multifunctional enzyme that catalyzes the conversion of the retro-elements RNA genome into dsDNA within the VLP. The enzyme displays a DNA polymerase activity that can copy either DNA or RNA templates, and a ribonuclease H (RNase H) activity that cleaves the RNA strand of RNA-DNA heteroduplexes during plus-strand synthesis and hydrolyzes RNA primers. The conversion leads to a linear dsDNA copy of the retrotransposon that includes long terminal repeats (LTRs) at both ends. Functionally, integrase (IN) targets the VLP to the nucleus, where a subparticle preintegration complex (PIC) containing at least integrase and the newly synthesized dsDNA copy of the retrotransposon must transit the nuclear membrane. Once in the nucleus, integrase performs the integration of the dsDNA into the host genome. The polypeptide is Truncated transposon Ty1-A Gag-Pol polyprotein (TY1B-A) (Saccharomyces cerevisiae (strain ATCC 204508 / S288c) (Baker's yeast)).